A 257-amino-acid chain; its full sequence is 3-deoxy-manno-octulosonate cytidylyltransferase (257 aa).

Belongs to the KdsB family.

The protein resides in the cytoplasm. It carries out the reaction 3-deoxy-alpha-D-manno-oct-2-ulosonate + CTP = CMP-3-deoxy-beta-D-manno-octulosonate + diphosphate. It functions in the pathway nucleotide-sugar biosynthesis; CMP-3-deoxy-D-manno-octulosonate biosynthesis; CMP-3-deoxy-D-manno-octulosonate from 3-deoxy-D-manno-octulosonate and CTP: step 1/1. The protein operates within bacterial outer membrane biogenesis; lipopolysaccharide biosynthesis. Activates KDO (a required 8-carbon sugar) for incorporation into bacterial lipopolysaccharide in Gram-negative bacteria. This chain is 3-deoxy-manno-octulosonate cytidylyltransferase, found in Stenotrophomonas maltophilia (strain K279a).